An 809-amino-acid polypeptide reads, in one-letter code: TPR repeat-containing protein TP_0920 (809 aa).

Positions 103-125 (PGEARALPNSEQPEVPASLDSTS) are disordered. TPR repeat units lie at residues 315–348 (LREY…DPHC), 383–416 (AFLS…DPHQ), 418–450 (LFAL…FLAQ), 471–504 (TEVR…GSAD), 513–550 (LLLR…APDC), 552–582 (LYHF…DPDN), 583–616 (GWLH…LPHE), 656–689 (GQAF…EPQN), and 723–756 (AHVY…WPQC).

This is TPR repeat-containing protein TP_0920 from Treponema pallidum (strain Nichols).